The sequence spans 833 residues: Vacuolar protein sorting-associated protein 16 homolog (833 aa).

It belongs to the VPS16 family. As to quaternary structure, component of the homotypic fusion and vacuole protein sorting (HOPS) complex, composed of Vps16A, car/Vps33A, dor/Vps18, Vps39, Vps11 and lt/Vps41. Interacts with Syx17 (via SNARE domain); the interaction may involve multiple components of the HOPS complex and may promote assembly of the Syx17-Snap29-Vamp7 trans-SNARE complex. Component of the class C core vacuole/endosome tethering (CORVET) complex composed of at least Vps8, dor/Vps18, car/Vps33A and Vps16A; unlike in other species, Vps11 is not part of the Drosophila complex. Due to the reduced number of components the Drosophila CORVET complex is often referred to as the miniCORVET complex. The tethering complex core made up of Vps16A, car/Vps33A and dor/Vps18 and shared by both HOPS and CORVET, preferentially associates with CORVET-specific Vps8 over HOPS-specific lt/Vps41. Interacts with Rab2 (GTP-bound form).

The protein resides in the late endosome membrane. It localises to the lysosome membrane. Its subcellular location is the cytoplasmic vesicle. The protein localises to the autophagosome. In terms of biological role, core component of the class C core vacuole/endosome tethering (CORVET) and the homotypic fusion and vacuole protein sorting (HOPS) tethering complexes involved in endo-lysosomal vesicle trafficking and lysosome biogenesis. The CORVET complex facilitates docking and fusion of endosomal vesicles during endosome maturation, acts upstream of HOPS, but is not involved in autophagic flux. The CORVET complex may cooperate with the early endosomal tether Rbsn-5 to mediate endosomal fusion. The HOPS complex facilitates docking and fusion of lysosomes with late endosomes and several other types of vesicles. The HOPS complex is also involved in autophagy and crinophagy (the elimination of unused secretory granules through their fusion with lysosomes). The HOPS complex mediates autophagocitic flux, probably by binding autophagosome-associated Syx17/syntaxin 17, promoting assembly of the trans-SNARE complex and instigating autophagosome-lysosome fusion. Independent of Syx17/syntaxin 17, HOPS is involved in biosynthetic transport to lysosomes and lysosome-related organelles such as eye-pigment granules. Required for endocytic degradation of boss/bride of sevenless and N/Notch in developing ommatidia. The polypeptide is Vacuolar protein sorting-associated protein 16 homolog (Drosophila melanogaster (Fruit fly)).